Reading from the N-terminus, the 726-residue chain is Probable alpha-galactosidase G (726 aa).

N23, N166, and N456 each carry an N-linked (GlcNAc...) asparagine glycan. D485 functions as the Nucleophile in the catalytic mechanism. The Proton donor role is filled by D547. N-linked (GlcNAc...) asparagine glycosylation is found at N657 and N673.

This sequence belongs to the glycosyl hydrolase 36 family. In terms of assembly, homotetramer. Mg(2+) is required as a cofactor. It depends on NAD(+) as a cofactor.

The protein resides in the secreted. The catalysed reaction is Hydrolysis of terminal, non-reducing alpha-D-galactose residues in alpha-D-galactosides, including galactose oligosaccharides, galactomannans and galactolipids.. In terms of biological role, hydrolyzes a variety of simple alpha-D-galactoside as well as more complex molecules such as oligosaccharides and polysaccharides. Not active on paranitrophenyl-alpha-galactoside and raffinose. The sequence is that of Probable alpha-galactosidase G (aglG) from Emericella nidulans (strain FGSC A4 / ATCC 38163 / CBS 112.46 / NRRL 194 / M139) (Aspergillus nidulans).